We begin with the raw amino-acid sequence, 507 residues long: Histidine ammonia-lyase (507 aa).

The 5-imidazolinone (Ala-Gly) cross-link spans 143 to 145 (ASG). The residue at position 144 (Ser144) is a 2,3-didehydroalanine (Ser).

This sequence belongs to the PAL/histidase family. In terms of processing, contains an active site 4-methylidene-imidazol-5-one (MIO), which is formed autocatalytically by cyclization and dehydration of residues Ala-Ser-Gly.

The protein localises to the cytoplasm. It carries out the reaction L-histidine = trans-urocanate + NH4(+). Its pathway is amino-acid degradation; L-histidine degradation into L-glutamate; N-formimidoyl-L-glutamate from L-histidine: step 1/3. This chain is Histidine ammonia-lyase, found in Alkaliphilus oremlandii (strain OhILAs) (Clostridium oremlandii (strain OhILAs)).